A 552-amino-acid polypeptide reads, in one-letter code: Probable protein kinase UbiB (552 aa).

The 384-residue stretch at 121–504 (HFDTVPLASA…QGLQRRVVNA (384 aa)) folds into the Protein kinase domain. ATP is bound by residues 127–135 (LASASISQV) and lysine 149. Aspartate 284 acts as the Proton acceptor in catalysis. Transmembrane regions (helical) follow at residues 501–521 (VVNA…YGLH) and 526–546 (YLGA…LALF).

It belongs to the ABC1 family. UbiB subfamily.

The protein localises to the cell inner membrane. It functions in the pathway cofactor biosynthesis; ubiquinone biosynthesis [regulation]. Functionally, is probably a protein kinase regulator of UbiI activity which is involved in aerobic coenzyme Q (ubiquinone) biosynthesis. The protein is Probable protein kinase UbiB of Xylella fastidiosa (strain 9a5c).